We begin with the raw amino-acid sequence, 355 residues long: MWNKNRLTQMLSIEYPIIQAGMAGSTTPKLVASVSNSGGLGTIGAGYFNTQQLEDEIDYVRQLTSNSFGVNVFVPSQQSYTSSQIENMNAWLKPYRRALHLEEPVVKITEEQQFKCHIDTIIKKQVPVCCFTFGIPSESIIKRLKEANIKLIGTATSVDEAIANEKAGMDAIVAQGSEAGGHRGSFLKPKNQLPMVGTISLVPQIVDVVSIPVIAAGGIMDGRGVLASIVLGAEGVQMGTAFLTSQDSNASELLRDAIINSKETDTVVTKAFSGKLARGINNRFIEEMSQYEGDIPDYPIQNELTSSIRKAAANIGDKELTHMWSGQSPRLATTHPANTIVSNIINQINQIMQYK.

Residues asparagine 71, glutamine 175, glycine 180, glycine 218, and 237–240 each bind FMN; that span reads QMGT.

This sequence belongs to the nitronate monooxygenase family. NMO class I subfamily. The cofactor is FMN.

The catalysed reaction is 3 propionate 3-nitronate + 3 O2 + H2O = 3 3-oxopropanoate + 2 nitrate + nitrite + H2O2 + 3 H(+). Nitronate monooxygenase that uses molecular oxygen to catalyze the oxidative denitrification of alkyl nitronates. Acts on propionate 3-nitronate (P3N), the presumed physiological substrate. Probably functions in the detoxification of P3N, a metabolic poison produced by plants and fungi as a defense mechanism. The chain is Probable nitronate monooxygenase from Staphylococcus aureus (strain MSSA476).